We begin with the raw amino-acid sequence, 453 residues long: Venom prothrombin activator notecarin-D2 (453 aa).

The signal sequence occupies residues 1–20; sequence MAPQLLLCLILTFLWSLPEA. Positions 21-40 are excised as a propeptide; sequence ESNVFLKSKVANRFLQRTKR. The 46-residue stretch at 41–86 folds into the Gla domain; the sequence is SNSLFEEIRPGNIERECIEEKCSKEEAREVFEDNEKTETFWNVYVD. 4-carboxyglutamate is present on residues Glu-46, Glu-47, Glu-54, Glu-56, Glu-59, Glu-60, Glu-65, Glu-66, Glu-69, Glu-72, and Glu-75. A disulfide bridge links Cys-57 with Cys-62. One can recognise an EGF-like 1; calcium-binding domain in the interval 86–122; sequence DGDQCSSNPCHYRGTCKDGIGSYTCTCLPNYEGKNCE. Cystine bridges form between Cys-90–Cys-101, Cys-95–Cys-110, Cys-112–Cys-121, Cys-129–Cys-140, Cys-136–Cys-149, Cys-151–Cys-164, Cys-172–Cys-326, Cys-216–Cys-221, Cys-236–Cys-252, Cys-374–Cys-388, and Cys-399–Cys-427. Ser-92 is a glycosylation site (O-linked (Hex...) serine). An EGF-like 2 domain is found at 129 to 164; it reads CRAFNGNCWHFCKRVQSETQCSCAESYLLGVDGHSC. Residues 182 to 209 constitute a propeptide, activation peptide; that stretch reads REASLPDFVQSQKATVLKKSDNPSPDIR. A Peptidase S1 domain is found at 210-451; sequence IVNGMDCKLG…FIPWIKKIMS (242 aa). His-251 serves as the catalytic Charge relay system. The N-linked (GlcNAc...) asparagine glycan is linked to Asn-254. Residue Asp-306 is the Charge relay system of the active site. The active-site Charge relay system is Ser-403.

This sequence belongs to the peptidase S1 family. Snake venom subfamily. Heterodimer of a light chain and a heavy chain; disulfide-linked. Post-translationally, gamma-carboxyglutamate residues are formed by vitamin K dependent carboxylation. These residues are essential for the binding of calcium. In terms of tissue distribution, expressed by the venom gland.

It is found in the secreted. The enzyme catalyses Selective cleavage of Arg-|-Thr and then Arg-|-Ile bonds in prothrombin to form thrombin.. Functionally, snake prothrombin activator that attacks the hemostatic system of prey. This protein is functionally similar to blood coagulation factor Xa. The sequence is that of Venom prothrombin activator notecarin-D2 from Notechis scutatus scutatus (Mainland tiger snake).